A 1995-amino-acid chain; its full sequence is uncharacterized protein (1995 aa).

7 consecutive transmembrane segments (helical) span residues 31-51 (NYTE…EFFK), 53-73 (FFSF…PDIA), 106-126 (LVIF…ILPT), 157-177 (FLWL…WLSL), 212-232 (IFLL…PFIS), 254-274 (FLLI…SLLQ), and 307-327 (ILNF…IPYY). Disordered stretches follow at residues 1418 to 1441 (SLKK…HQFS) and 1848 to 1883 (DLRW…KTNP). Composition is skewed to basic residues over residues 1422–1441 (SQIK…HQFS) and 1853–1863 (PSSRTKQKRKD).

It belongs to the ycf78 family.

It is found in the plastid. Its subcellular location is the chloroplast membrane. In terms of biological role, essential for cell growth. May be involved in binding chloroplast DNA to either the chloroplast envelope or the thylakoid membrane. This is an uncharacterized protein from Chlamydomonas reinhardtii (Chlamydomonas smithii).